The primary structure comprises 268 residues: M1-specific T cell receptor alpha chain (268 aa).

A signal peptide spans 1-19 (MVLKFSVSILWIQLAWVST). In terms of domain architecture, Ig-like V-type spans 20–107 (QLLEQSPQFL…QPGDTGLYLC (88 aa)). The tract at residues 20-109 (QLLEQSPQFL…GDTGLYLCAG (90 aa)) is t cell receptor alpha variable 27. Residues Asn36 and Asn42 are each glycosylated (N-linked (GlcNAc...) asparagine). A disulfide bond links Cys41 and Cys107. The CDR1 stretch occupies residues 45–49 (SVFSS). Residues 67-69 (VVT) are CDR2. The interval 107–118 (CAGGGSQGNLIF) is CDR3. The segment at 110–128 (GGSQGNLIFGKGTKLSVKP) is t cell receptor alpha joining 42. Residues 129 to 268 (IQNPDPAVYQ…LLMTLRLWSS (140 aa)) form a t cell receptor alpha constant region. Residues 147 to 235 (KSVCLFTDFD…LVEKSFETDT (89 aa)) form the Ig-like C1-type domain. The cysteines at positions 150 and 200 are disulfide-linked. N-linked (GlcNAc...) asparagine glycans are attached at residues Asn160, Asn194, Asn205, and Asn241. The tract at residues 222–243 (CDVKLVEKSFETDTNLNFQNLS) is connecting peptide. The chain crosses the membrane as a helical span at residues 244–266 (VIGFRILLLKVAGFNLLMTLRLW). Topologically, residues 267-268 (SS) are cytoplasmic.

In terms of assembly, disulfide-linked heterodimer with TRBV19*01J2S7*01C*02 beta chain. The TR primarily interacts via its CDR3-beta domain with M/matrix protein 1-derived peptide (GILGFVFTL) displayed by HLA-A*02.01 in a 'peg-notch' recognition mode. The alpha-beta TR associates with the transmembrane signaling CD3 coreceptor proteins to form the TR-CD3 (TCR). The assembly of alpha-beta TR heterodimers with CD3 occurs in the endoplasmic reticulum where a single alpha-beta TR heterodimer associates with one CD3D-CD3E heterodimer, one CD3G-CD3E heterodimer and one CD247 homodimer forming a stable octameric structure. CD3D-CD3E and CD3G-CD3E heterodimers preferentially associate with TR alpha and TR beta chains (via TM domain), respectively. The association of the CD247 homodimer is the last step of TCR assembly in the endoplasmic reticulum and is required for transport to the cell surface. Expressed in M/matrix protein 1-specific effector and memory CD8-positive T cells readily detectable in the peripheral blood, secondary lymphoid organs and lung (primary site of infection) of IAV infected individuals.

It localises to the cell membrane. In terms of biological role, the alpha chain of TRAV27*01J42*01C*01/TRBV19*01J2S7*01C*02 alpha-beta T cell receptor (TR) clonotype that is specific for HLA-A*02:01-restricted M/matrix protein 1 immunodominant epitope GILGFVFTL of influenza A virus (IAV). Classified as a public TR clonotype, it is preferentially selected in effector memory CD8-positive T cells among multiple HLA-A*02:01 carriers and confers long-lived immunity against IAV infection. Can cross-recognize sporadically emerging IAV variants by molecular mimicry, inducing immunity toward different influenza strains. Antigen recognition initiates TR-CD3 clustering on the cell surface and intracellular activation of LCK that phosphorylates the ITAM motifs of CD3G, CD3D, CD3E and CD247 enabling the recruitment of ZAP70. In turn, ZAP70 phosphorylates LAT, which recruits numerous signaling molecules to form the LAT signalosome. The LAT signalosome propagates signal branching to three major signaling pathways, the calcium, the mitogen-activated protein kinase (MAPK) kinase and the nuclear factor NF-kappa-B (NF-kB) pathways, leading to the mobilization of transcription factors that are critical for gene expression and essential for T cell differentiation into effector/memory T cells. The polypeptide is M1-specific T cell receptor alpha chain (Homo sapiens (Human)).